The following is a 136-amino-acid chain: Psoriasis susceptibility 1 candidate gene 2 protein homolog (136 aa).

A signal peptide spans 1 to 22 (MILNWKLLGILVLCLHTRGISG). The interval 20–136 (ISGSEDHPSH…DLDPPREEYR (117 aa)) is disordered. A compositionally biased stretch (basic and acidic residues) spans 23 to 33 (SEDHPSHPPAE). Composition is skewed to pro residues over residues 44–74 (PQGP…PPWR) and 83–116 (PPEP…PPAP). Basic and acidic residues predominate over residues 117 to 136 (EVDHRPQEEPDLDPPREEYR).

It localises to the secreted. This Pan troglodytes (Chimpanzee) protein is Psoriasis susceptibility 1 candidate gene 2 protein homolog (PSORS1C2).